Reading from the N-terminus, the 64-residue chain is H/ACA ribonucleoprotein complex subunit 3 (64 aa).

The protein belongs to the NOP10 family. As to quaternary structure, component of the box H/ACA small nucleolar ribonucleoprotein (H/ACA snoRNP) complex consisting of Nop60B, Gar1, NPH2 and Nop10, and associated with H/ACA-type snoRNAs.

It localises to the nucleus. Its subcellular location is the nucleolus. Its function is as follows. Component of the box H/ACA small nucleolar ribonucleoprotein (H/ACA snoRNP) complex, which catalyzes pseudouridylation of rRNA. This involves the isomerization of uridine such that the ribose is subsequently attached to C5, instead of the normal N1. Pseudouridine ('psi') residues may serve to stabilize the conformation of rRNAs. Required for ribosome biogenesis. H/ACA snoRNP complex-dependent ribosome biogenesis is important in female germline cell differentiation during oogenesis. The chain is H/ACA ribonucleoprotein complex subunit 3 from Drosophila melanogaster (Fruit fly).